Here is a 293-residue protein sequence, read N- to C-terminus: 2-pyrone-4,6-dicarboxylate hydrolase (293 aa).

The disordered stretch occupies residues 1-20 (MTNDERILSWNETPSKPRYT). Substrate-binding positions include 29–31 (HCH), Tyr-47, Ser-75, Arg-122, Arg-128, Tyr-154, and His-178. Asp-246 functions as the Proton acceptor in the catalytic mechanism. Asn-251 serves as a coordination point for substrate.

Belongs to the metallo-dependent hydrolases superfamily. PDC hydrolase family. As to quaternary structure, monomer.

It carries out the reaction 2-oxo-2H-pyran-4,6-dicarboxylate + H2O = (1E)-4-oxobut-1-ene-1,2,4-tricarboxylate + H(+). It participates in secondary metabolite metabolism; lignin degradation. Its activity is regulated as follows. Strongly inhibited by 1 mM Zn(2+) ions. Also inhibited by pyridine-2,4-dicarboxylic acid, 5-hydroxyisophthalic acid and 5,5'-dithiobis(2-nitrobenzoic acid) (Ellman reagent). Functionally, contributes to the degradation of lignin at the level of the protocatechuate 4,5-cleavage pathway. Catalyzes the hydrolysis of 2-pyrone-4,6-dicarboxylate (PDC) to (4E)-oxalomesaconate (OMA). The keto form of OMA can tautomerize into the enol form, 4-carboxy-2-hydroxymuconate (CHM), under certain pH conditions. Also catalyzes the reverse reaction. Is essential for the growth of Sphingobium sp. SYK-6 on vanillate but is not responsible for the growth of this strain on syringate. This is 2-pyrone-4,6-dicarboxylate hydrolase from Sphingobium sp. (strain NBRC 103272 / SYK-6).